Reading from the N-terminus, the 214-residue chain is Adenylate kinase (214 aa).

10–15 lines the ATP pocket; it reads GAGKGT. The tract at residues 30–59 is NMP; it reads STGDMLRAAVKAGTPLGLEAKKVMDAGQLV. AMP is bound by residues threonine 31, arginine 36, 57-59, 85-88, and glutamine 92; these read QLV and GFPR. An LID region spans residues 122–159; that stretch reads GRRVHPGSGRVYHVVFNPPKVEGKDDVTGEDLAIRPDD. ATP-binding positions include arginine 123 and 132–133; that span reads VY. Residues arginine 156 and arginine 167 each coordinate AMP. Glutamine 200 is an ATP binding site.

The protein belongs to the adenylate kinase family. In terms of assembly, monomer.

The protein localises to the cytoplasm. It carries out the reaction AMP + ATP = 2 ADP. It functions in the pathway purine metabolism; AMP biosynthesis via salvage pathway; AMP from ADP: step 1/1. Functionally, catalyzes the reversible transfer of the terminal phosphate group between ATP and AMP. Plays an important role in cellular energy homeostasis and in adenine nucleotide metabolism. This is Adenylate kinase from Shewanella sp. (strain ANA-3).